A 308-amino-acid chain; its full sequence is Methionyl-tRNA formyltransferase (308 aa).

Position 109–112 (S109–P112) interacts with (6S)-5,6,7,8-tetrahydrofolate.

This sequence belongs to the Fmt family.

It catalyses the reaction L-methionyl-tRNA(fMet) + (6R)-10-formyltetrahydrofolate = N-formyl-L-methionyl-tRNA(fMet) + (6S)-5,6,7,8-tetrahydrofolate + H(+). Attaches a formyl group to the free amino group of methionyl-tRNA(fMet). The formyl group appears to play a dual role in the initiator identity of N-formylmethionyl-tRNA by promoting its recognition by IF2 and preventing the misappropriation of this tRNA by the elongation apparatus. This is Methionyl-tRNA formyltransferase from Salinispora tropica (strain ATCC BAA-916 / DSM 44818 / JCM 13857 / NBRC 105044 / CNB-440).